A 154-amino-acid chain; its full sequence is Ribosome maturation factor RimP (154 aa).

This sequence belongs to the RimP family.

Its subcellular location is the cytoplasm. Required for maturation of 30S ribosomal subunits. This Yersinia pseudotuberculosis serotype O:1b (strain IP 31758) protein is Ribosome maturation factor RimP.